Reading from the N-terminus, the 387-residue chain is MTSHPVFIDLSLDEQVQELRKYFKKLGAEISSEKSNKGVEDDLHKIIGVCDVCFKDGEPSQIDGILNSIVSIMITIPLDRGENIVLAYCEKMTKAPNQPLGKVCLQSLWRLFNNLDTASPLRYHVYYHLVQVAKQCEQVLEVFTGVDQLKTQFANCPPSSEQMQKLYRLLHDVTKDTNMELSSKVMIELLGTYTADNACVAREDAMKCIVTALADPNTFLLDPLLALKPVRFLEGDLIHDLLSIFVSDKLPSYVQFYEDHKEFVNSQGLNHEQNMKKMRLLTFMQLAESNPEMTFDTLTKELQITEDEVEPFVIQVLKTKLVRARLDQANRKVHISSTMHRTFGAPQWEQLRDLLQAWKENLSSVRDGLTNVSSAQLELARTQKLIH.

Positions 181–340 (LSSKVMIELL…RKVHISSTMH (160 aa)) constitute a PCI domain.

It belongs to the eIF-3 subunit M family. Component of the eukaryotic translation initiation factor 3 (eIF-3) complex. The eIF-3 complex interacts with pix.

The protein resides in the cytoplasm. It is found in the golgi apparatus. In terms of biological role, component of the eukaryotic translation initiation factor 3 (eIF-3) complex, which is involved in protein synthesis of a specialized repertoire of mRNAs and, together with other initiation factors, stimulates binding of mRNA and methionyl-tRNAi to the 40S ribosome. The eIF-3 complex specifically targets and initiates translation of a subset of mRNAs involved in cell proliferation. This Drosophila pseudoobscura pseudoobscura (Fruit fly) protein is Eukaryotic translation initiation factor 3 subunit M.